A 106-amino-acid chain; its full sequence is MGNNNDWLNFEHLAEEKQIDAVKPPSMYKVILNNDDYTPMEFVIDVLQKFFSYDIERATQLMLTVHYQGKAICGVFTAEVAETKVVHVNRYARENEHPLLCTLEKA.

The protein belongs to the ClpS family. Binds to the N-terminal domain of the chaperone ClpA.

Its function is as follows. Involved in the modulation of the specificity of the ClpAP-mediated ATP-dependent protein degradation. In Serratia proteamaculans (strain 568), this protein is ATP-dependent Clp protease adapter protein ClpS.